Consider the following 270-residue polypeptide: 23S rRNA (adenosine(1067)-2'-O)-methyltransferase (270 aa).

Residues Arg-135, Arg-165, Gly-218, Ile-238, and Leu-247 each coordinate S-adenosyl-L-methionine.

Belongs to the class IV-like SAM-binding methyltransferase superfamily. RNA methyltransferase TsnR/AvirB family.

It catalyses the reaction adenosine(1067) in 23S rRNA + S-adenosyl-L-methionine = 2'-O-methyladenosine(1067) in 23S rRNA + S-adenosyl-L-homocysteine + H(+). In terms of biological role, specifically methylates the adenosine-1067 in 23S ribosomal RNA. Confers resistance to antibiotic thiostrepton. The polypeptide is 23S rRNA (adenosine(1067)-2'-O)-methyltransferase (Streptomyces laurentii).